Reading from the N-terminus, the 432-residue chain is Trigger factor (432 aa).

The PPIase FKBP-type domain occupies G162–P247.

It belongs to the FKBP-type PPIase family. Tig subfamily.

Its subcellular location is the cytoplasm. The catalysed reaction is [protein]-peptidylproline (omega=180) = [protein]-peptidylproline (omega=0). Involved in protein export. Acts as a chaperone by maintaining the newly synthesized protein in an open conformation. Functions as a peptidyl-prolyl cis-trans isomerase. The polypeptide is Trigger factor (Thiobacillus denitrificans (strain ATCC 25259 / T1)).